Consider the following 711-residue polypeptide: Putative membrane protein IgaA homolog (711 aa).

M1 is a topological domain (periplasmic). A helical transmembrane segment spans residues 2 to 22; that stretch reads STIVIFLAALLACSLLAGWLI. At 23–204 the chain is on the cytoplasmic side; that stretch reads KVRSRRRQLP…YALSRPRGLR (182 aa). Helical transmembrane passes span 205-225 and 226-246; these read EALL…TPDV and FVPW…WGLF. The Cytoplasmic segment spans residues 247–339; it reads APPAKSSLRE…KNFPLQHWLR (93 aa). A helical membrane pass occupies residues 340–360; it reads STIIAAGSLLVLFMLLFWIPL. The Periplasmic portion of the chain corresponds to 361-655; sequence DMPLKFTLSW…IPDRSGLWRY (295 aa). A helical transmembrane segment spans residues 656-676; that stretch reads LSTTLLLLTMLGSAIYNGVQA. Residues 677 to 711 lie on the Cytoplasmic side of the membrane; it reads WRRYQRHRTRMMKIQAYYESCLNPQLITPSESLIE.

Belongs to the IgaA family.

The protein resides in the cell inner membrane. The chain is Putative membrane protein IgaA homolog (yrfF) from Escherichia coli O157:H7.